The following is a 274-amino-acid chain: Diaminopimelate epimerase (274 aa).

Substrate contacts are provided by Asn11 and Asn62. The active-site Proton donor is the Cys71. Substrate-binding positions include 72-73, Asn157, Asn190, and 208-209; these read GN and ER. Catalysis depends on Cys217, which acts as the Proton acceptor. Residue 218–219 coordinates substrate; it reads GT.

This sequence belongs to the diaminopimelate epimerase family. Homodimer.

The protein resides in the cytoplasm. It catalyses the reaction (2S,6S)-2,6-diaminopimelate = meso-2,6-diaminopimelate. It participates in amino-acid biosynthesis; L-lysine biosynthesis via DAP pathway; DL-2,6-diaminopimelate from LL-2,6-diaminopimelate: step 1/1. Catalyzes the stereoinversion of LL-2,6-diaminopimelate (L,L-DAP) to meso-diaminopimelate (meso-DAP), a precursor of L-lysine and an essential component of the bacterial peptidoglycan. The chain is Diaminopimelate epimerase from Elusimicrobium minutum (strain Pei191).